A 134-amino-acid polypeptide reads, in one-letter code: 4-carboxymuconolactone decarboxylase (134 aa).

This sequence belongs to the carboxymuconolactone decarboxylase family.

The catalysed reaction is (R)-2-(carboxymethyl)-5-oxo-2,5-dihydro-2-furoate + H(+) = (4,5-dihydro-5-oxofuran-2-yl)-acetate + CO2. It functions in the pathway aromatic compound metabolism; beta-ketoadipate pathway; 5-oxo-4,5-dihydro-2-furylacetate from 3-carboxy-cis,cis-muconate: step 2/2. The polypeptide is 4-carboxymuconolactone decarboxylase (pcaC) (Acinetobacter baylyi (strain ATCC 33305 / BD413 / ADP1)).